Here is a 676-residue protein sequence, read N- to C-terminus: UvrABC system protein B (676 aa).

Residues 39-424 form the Helicase ATP-binding domain; it reads RGILDGIPSQ…RGHIIEQIIR (386 aa). Residue 52–59 coordinates ATP; the sequence is GTTGSGKT. The Beta-hairpin signature appears at 105 to 128; the sequence is YYDYYQPEAYIARSDTYIEKSLLI. The 164-residue stretch at 441 to 604 folds into the Helicase C-terminal domain; sequence QIDDLLEEIR…ITPKPIIKPI (164 aa). Residues 611 to 631 form a disordered region; it reads KEGAQEDSRPETQSTEDLESS. In terms of domain architecture, UVR spans 629–664; the sequence is ESSIKQYEEAMYKAAQDFQFDEAAKYRDLMNAAKRQ.

It belongs to the UvrB family. In terms of assembly, forms a heterotetramer with UvrA during the search for lesions. Interacts with UvrC in an incision complex.

Its subcellular location is the cytoplasm. Functionally, the UvrABC repair system catalyzes the recognition and processing of DNA lesions. A damage recognition complex composed of 2 UvrA and 2 UvrB subunits scans DNA for abnormalities. Upon binding of the UvrA(2)B(2) complex to a putative damaged site, the DNA wraps around one UvrB monomer. DNA wrap is dependent on ATP binding by UvrB and probably causes local melting of the DNA helix, facilitating insertion of UvrB beta-hairpin between the DNA strands. Then UvrB probes one DNA strand for the presence of a lesion. If a lesion is found the UvrA subunits dissociate and the UvrB-DNA preincision complex is formed. This complex is subsequently bound by UvrC and the second UvrB is released. If no lesion is found, the DNA wraps around the other UvrB subunit that will check the other stand for damage. In Chlamydia muridarum (strain MoPn / Nigg), this protein is UvrABC system protein B.